We begin with the raw amino-acid sequence, 38 residues long: Photosystem II reaction center protein L (38 aa).

A helical membrane pass occupies residues 17-37; the sequence is GLYWGLLLIFVLAVLFSSYFF.

Belongs to the PsbL family. In terms of assembly, PSII is composed of 1 copy each of membrane proteins PsbA, PsbB, PsbC, PsbD, PsbE, PsbF, PsbH, PsbI, PsbJ, PsbK, PsbL, PsbM, PsbT, PsbX, PsbY, PsbZ, Psb30/Ycf12, at least 3 peripheral proteins of the oxygen-evolving complex and a large number of cofactors. It forms dimeric complexes.

It is found in the plastid. It localises to the chloroplast thylakoid membrane. One of the components of the core complex of photosystem II (PSII). PSII is a light-driven water:plastoquinone oxidoreductase that uses light energy to abstract electrons from H(2)O, generating O(2) and a proton gradient subsequently used for ATP formation. It consists of a core antenna complex that captures photons, and an electron transfer chain that converts photonic excitation into a charge separation. This subunit is found at the monomer-monomer interface and is required for correct PSII assembly and/or dimerization. In Staurastrum punctulatum (Green alga), this protein is Photosystem II reaction center protein L.